The chain runs to 195 residues: ATP-dependent Clp protease proteolytic subunit (195 aa).

Catalysis depends on Ser99, which acts as the Nucleophile. Residue His124 is part of the active site.

Belongs to the peptidase S14 family. In terms of assembly, fourteen ClpP subunits assemble into 2 heptameric rings which stack back to back to give a disk-like structure with a central cavity, resembling the structure of eukaryotic proteasomes.

It is found in the cytoplasm. The enzyme catalyses Hydrolysis of proteins to small peptides in the presence of ATP and magnesium. alpha-casein is the usual test substrate. In the absence of ATP, only oligopeptides shorter than five residues are hydrolyzed (such as succinyl-Leu-Tyr-|-NHMec, and Leu-Tyr-Leu-|-Tyr-Trp, in which cleavage of the -Tyr-|-Leu- and -Tyr-|-Trp bonds also occurs).. Its function is as follows. Cleaves peptides in various proteins in a process that requires ATP hydrolysis. Has a chymotrypsin-like activity. Plays a major role in the degradation of misfolded proteins. This chain is ATP-dependent Clp protease proteolytic subunit, found in Coxiella burnetii (strain RSA 331 / Henzerling II).